A 197-amino-acid chain; its full sequence is Recombination protein RecR (197 aa).

The C4-type zinc-finger motif lies at 56 to 71 (CSRCFNLSAEDPCDIC). In terms of domain architecture, Toprim spans 79 to 174 (ETICVVAEPR…RVTRIAFGLP (96 aa)).

It belongs to the RecR family.

May play a role in DNA repair. It seems to be involved in an RecBC-independent recombinational process of DNA repair. It may act with RecF and RecO. This chain is Recombination protein RecR, found in Gloeobacter violaceus (strain ATCC 29082 / PCC 7421).